We begin with the raw amino-acid sequence, 944 residues long: E3 ubiquitin-protein ligase JMJ24 (944 aa).

2 disordered regions span residues 20 to 40 (QTRS…GIPD) and 77 to 103 (ANSA…YSEG). Residues 38 to 83 (IPDDLRCKRSDGKQWRCTAMSMADKTVCEKHYIQAKKRAANSAFRA) enclose the WRC domain. The short motif at 73–80 (KKRAANSA) is the Nuclear localization signal 1 element. The segment at 217 to 269 (GEICHQCQRKDRERIISCLKCNQRAFCHNCLSARYSEISLEEVEKVCPACRGL) adopts a PHD-type; atypical zinc-finger fold. Zn(2+) is bound by residues Cys-220, Cys-223, Cys-234, Cys-237, Cys-243, Cys-246, Cys-263, and Cys-266. The Nuclear localization signal 2 signature appears at 323-330 (EKRLREVE). Positions 621–873 (PRLGLLNVAA…ESARLAEEIR (253 aa)) constitute a JmjC domain. The segment covering 685–703 (ERVRKTKPVPEEPDQKMSE) has biased composition (basic and acidic residues). A disordered region spans residues 685-715 (ERVRKTKPVPEEPDQKMSENESLLSPEQKLR).

This sequence belongs to the JARID1 histone demethylase family. Homodimer. Interacts with RDR2. Binds to CMT3. Associates with the E2 ubiquitin-conjugating enzyme UBC10. Post-translationally, self-ubiquitinates. As to expression, expressed in inflorescences, flowers, roots, siliques, leaves and stems, especially in the vasculature (mainly phloem), with highest levels in floral organs.

The protein resides in the nucleus. It catalyses the reaction S-ubiquitinyl-[E2 ubiquitin-conjugating enzyme]-L-cysteine + [acceptor protein]-L-lysine = [E2 ubiquitin-conjugating enzyme]-L-cysteine + N(6)-ubiquitinyl-[acceptor protein]-L-lysine.. Its function is as follows. Binds histone H3 but seems to have lost demethylase activity probably due to its inability to bind iron Fe(2+). Possesses E3 ubiquitin ligase activity and targets directly CMT3 for proteasomal degradation to initiate destabilization of the heterochromatic state (e.g. CHG cytosine methylation and H3K9me2) of endogenous silenced loci. Required for the removal of repressive H3K9me2 histone marks to facilitate the transcription of AtSN1, AtMu1c, solo LTR and SDC, thus counteracting their transcriptional silencing. Mainly required to promote the basal level transcription of silenced loci such as TE and repeats targeted by RNA-dependent DNA methylation (RdDM) for silencing, a specialized branch of the RNA interference (RNAi) pathway. Also cooperates with RNAi pathways for gene silencing both by contributing to the production of 24-nt siRNA to initiate RdDM and by recruiting RDR2 to enable local transcripts to make dsRNA. Antagonizes histone H3K9 demethylase IBM1/JMJ25 function. The polypeptide is E3 ubiquitin-protein ligase JMJ24 (Arabidopsis thaliana (Mouse-ear cress)).